We begin with the raw amino-acid sequence, 297 residues long: Homoserine kinase (297 aa).

ATP is bound at residue 82–92; that stretch reads PVSRGLGSSAA.

It belongs to the GHMP kinase family. Homoserine kinase subfamily.

It is found in the cytoplasm. It catalyses the reaction L-homoserine + ATP = O-phospho-L-homoserine + ADP + H(+). The protein operates within amino-acid biosynthesis; L-threonine biosynthesis; L-threonine from L-aspartate: step 4/5. Its function is as follows. Catalyzes the ATP-dependent phosphorylation of L-homoserine to L-homoserine phosphate. This is Homoserine kinase from Clostridium botulinum (strain Loch Maree / Type A3).